Consider the following 455-residue polypeptide: UDP-glycosyltransferase 2 (455 aa).

The protein belongs to the UDP-glycosyltransferase family.

The catalysed reaction is exophillate + UDP-alpha-D-galactose = phaeomoniecin D + UDP + H(+). It functions in the pathway secondary metabolite biosynthesis. In terms of biological role, catalyzes the second glycosylation step during phaeomoniecin D biosynthesis, the further O-galactosylation of exophillic acid (produced by the O-glycosyltransferase OGT1) to yield the 4-O-beta-D-galactoside phaeomoniecin D. The protein is UDP-glycosyltransferase 2 of Phaeomoniella chlamydospora (Phaeoacremonium chlamydosporum).